The following is a 323-amino-acid chain: MEVNISMPLNGSEVVFYDSTTSRVLWILSLVVLFITFVLGVLGNGLVIWVAGFQMAHTVTTVSYLNLALSDLSFMATLPLHIISMVMRGKWLFGWFLCKLVHIIANINLFVSIFLITLIAMDRCICVLCPVWSQNHRTVSLARKVVLGAWIFALLLTLPHFLFLTTVRDARGDVYCISKFESWVATSEEQLKVSVIAATASGIINFIIGFSMPMSFIAICYGLMAAKICRRGFVNSSRPLRVLTAVAVSFFVCWFPFQLIMLLGNIFNNETLSIIHMLVNPANTLASFNSCLNPILYVFLGQEFRDRLIYSLYASLERALRED.

Residues 1–29 (MEVNISMPLNGSEVVFYDSTTSRVLWILS) are Extracellular-facing. 2 N-linked (GlcNAc...) asparagine glycosylation sites follow: N4 and N10. A helical membrane pass occupies residues 30 to 50 (LVVLFITFVLGVLGNGLVIWV). At 51-66 (AGFQMAHTVTTVSYLN) the chain is on the cytoplasmic side. Residues 67–87 (LALSDLSFMATLPLHIISMVM) form a helical membrane-spanning segment. The Extracellular portion of the chain corresponds to 88 to 99 (RGKWLFGWFLCK). An intrachain disulfide couples C98 to C176. Residues 100 to 120 (LVHIIANINLFVSIFLITLIA) form a helical membrane-spanning segment. At 121–144 (MDRCICVLCPVWSQNHRTVSLARK) the chain is on the cytoplasmic side. Residues 145-165 (VVLGAWIFALLLTLPHFLFLT) form a helical membrane-spanning segment. Residues 166 to 202 (TVRDARGDVYCISKFESWVATSEEQLKVSVIAATASG) lie on the Extracellular side of the membrane. The chain crosses the membrane as a helical span at residues 203–223 (IINFIIGFSMPMSFIAICYGL). Residues 224 to 241 (MAAKICRRGFVNSSRPLR) lie on the Cytoplasmic side of the membrane. Residues 242–262 (VLTAVAVSFFVCWFPFQLIML) traverse the membrane as a helical segment. The Extracellular segment spans residues 263–280 (LGNIFNNETLSIIHMLVN). A glycan (N-linked (GlcNAc...) asparagine) is linked at N269. Residues 281 to 301 (PANTLASFNSCLNPILYVFLG) form a helical membrane-spanning segment. The Cytoplasmic portion of the chain corresponds to 302–323 (QEFRDRLIYSLYASLERALRED).

Belongs to the G-protein coupled receptor 1 family. In terms of tissue distribution, expressed in 0.6 % of a subset of sensory neurons located in the apical layer of the vomeronasal organ. Each neuron appears to express only one receptor gene.

It localises to the cell membrane. Functionally, may have an olfactory function associated with the identification of pathogens or of pathogenic states. The polypeptide is Formyl peptide receptor-related sequence 4 (Fpr-rs4) (Mus musculus (Mouse)).